Here is an 88-residue protein sequence, read N- to C-terminus: Kunitz-type kappaPI-theraphotoxin-Hs1d (88 aa).

The N-terminal stretch at 1–27 is a signal peptide; that stretch reads MGIARILSAVLFLSVLFVVTFPTLLSA. Positions 28-33 are excised as a propeptide; it reads DHHDGR. The BPTI/Kunitz inhibitor domain occupies 37 to 85; the sequence is CRLPSDRGRCKASFERWYFNGTTCTKFVYGGYGGNDNRFPTEKACMKRC. 2 disulfide bridges follow: Cys37–Cys85 and Cys60–Cys81.

It belongs to the venom Kunitz-type family. 01 (intermediate) subfamily. Expressed by the venom gland.

It localises to the secreted. Functionally, serine protease inhibitor that inhibits trypsin at a molar ratio of 1:1. The chain is Kunitz-type kappaPI-theraphotoxin-Hs1d from Cyriopagopus schmidti (Chinese bird spider).